The following is a 464-amino-acid chain: MTQKTRTRFAPSPTGFIHLGNIRSALYPWAFARATGGDFILRIEDTDVDRSSQAAVDVIIEGMRWLGLDYDEGPFYQMQRMDRYKAVLAEMVNAGHVYPCYMSVAELDALREAQMAAKEKPRYDGTWRPEPGKTLPAIPEGVQPVLRFKNPQGGAVVWDDKVKGRIEISNDELDDLVIARPDGTPTYNFCVVVDDMDMAITHVIRGDDHVNNTPRQINIFRALGREVPVYAHLPTVLNEQGEKMSKRNGAKPVTQYAAEGYLPDAMVNYLARLGWSHGDDEIFSREQFLQWFNLDHLGKSAAQFDEAKLRWVNAQHLKAMADDQLAERVQPFLAALDVSGLDAGWLAQSCALFKDRCSTLVELAGWLKLLVTGAEPSAQDVSTHVTDAVRPALAKLAQALATCEWTKAAIAAAIKQVLLDTGLKMPQLAMPVRVLLMGTPQTPSLDAILSLMAREKVIAKLNLV.

Residues 11–21 (PSPTGFIHLGN) carry the 'HIGH' region motif. A 'KMSKS' region motif is present at residues 243-247 (KMSKR). Lys-246 contacts ATP.

It belongs to the class-I aminoacyl-tRNA synthetase family. Glutamate--tRNA ligase type 1 subfamily. Monomer.

It localises to the cytoplasm. The enzyme catalyses tRNA(Glu) + L-glutamate + ATP = L-glutamyl-tRNA(Glu) + AMP + diphosphate. Its function is as follows. Catalyzes the attachment of glutamate to tRNA(Glu) in a two-step reaction: glutamate is first activated by ATP to form Glu-AMP and then transferred to the acceptor end of tRNA(Glu). This is Glutamate--tRNA ligase from Polaromonas naphthalenivorans (strain CJ2).